The following is an 827-amino-acid chain: Mitogen-activated protein kinase kinase kinase kinase 1 (827 aa).

In terms of domain architecture, Protein kinase spans 17-274; sequence YDLLQRLGGG…ATKMLSHQLV (258 aa). Residues 23 to 31 and lysine 46 contribute to the ATP site; that span reads LGGGTYGEV. The active-site Proton acceptor is aspartate 137. At threonine 165 the chain carries Phosphothreonine; by autocatalysis. Serine 171 carries the phosphoserine; by autocatalysis modification. Threonine 175 is modified (phosphothreonine; by autocatalysis). Residues 296-315 are disordered; the sequence is KGLPVDIEDEEPEPPPAIPR. Phosphothreonine; by autocatalysis is present on threonine 354. The interval 359-485 is disordered; sequence PPAHFGSTSP…KMRGKMENEK (127 aa). Residues serine 373, serine 375, serine 403, serine 405, and serine 419 each carry the phosphoserine modification. Positions 374 to 383 are enriched in acidic residues; it reads DSDDDYDDVD. Pro residues-rich tracts occupy residues 429 to 443 and 461 to 471; these read GPPP…PPAT and APEPGQPPLVP. Positions 472-485 are enriched in basic and acidic residues; that stretch reads PRKEKMRGKMENEK. One can recognise a CNH domain in the interval 501 to 806; it reads PLQIHSTAAW…TFRLLCSPRP (306 aa). Residue serine 592 is modified to Phosphoserine.

Belongs to the protein kinase superfamily. STE Ser/Thr protein kinase family. STE20 subfamily. Interacts with MAP3K1. Interacts with FBXW8. Interacts with CLNK (via its SH2 domain). Mg(2+) serves as cofactor. Post-translationally, autophosphorylates: phosphorylation promotes ubiquitination by the Cul7-RING(FBXW8) ubiquitin-protein ligase complex, leading to its degradation by the proteasome. Tyrosine-phosphorylated after activation of hemopoietic cells. In terms of processing, ubiquitinated by the Cul7-RING(FBXW8) ubiquitin-protein ligase complex following autophosphorylation, leading to its degradation by the proteasome. In terms of tissue distribution, expressed in hemopoietic cells (at protein level). Ubiquitously expressed in all tissues examined at embryonic stage 16.5 dpc with high levels in lung, heart and fetal liver. In the neonate, expression is restricted to the tissues which undergo lineage decisions, lung, thymus, liver, kidney and brain. In the adult, expression is limited to hemopoietic organs, thymus, bone marrow, and spleen and to the testis.

It catalyses the reaction L-seryl-[protein] + ATP = O-phospho-L-seryl-[protein] + ADP + H(+). The enzyme catalyses L-threonyl-[protein] + ATP = O-phospho-L-threonyl-[protein] + ADP + H(+). Its function is as follows. Serine/threonine-protein kinase, which plays a role in the response to environmental stress. Appears to act upstream of the JUN N-terminal pathway. Activator of the Hippo signaling pathway which plays a pivotal role in organ size control and tumor suppression by restricting proliferation and promoting apoptosis. MAP4Ks act in parallel to and are partially redundant with STK3/MST2 and STK4/MST2 in the phosphorylation and activation of LATS1/2, and establish MAP4Ks as components of the expanded Hippo pathway. May play a role in hematopoietic lineage decisions and growth regulation. Together with CLNK, it enhances CD3-triggered activation of T-cells and subsequent IL2 production. The sequence is that of Mitogen-activated protein kinase kinase kinase kinase 1 (Map4k1) from Mus musculus (Mouse).